A 518-amino-acid chain; its full sequence is Glycerophosphoinositol transporter 1 (518 aa).

Topologically, residues 1 to 44 (MEDKDITSVNEKEVNENTNPRIIKYDAERRATRTETSKKDKWKN) are cytoplasmic. A helical transmembrane segment spans residues 45–65 (IVTIIASGFALISDGYVNGSM). At 66–91 (SMLNKVFVMEYGKKNYSSKVSTRVSN) the chain is on the extracellular side. N-linked (GlcNAc...) asparagine glycosylation occurs at asparagine 80. Residues 92 to 112 (AALVGIIFGQFFMGIAADYYS) traverse the membrane as a helical segment. The Cytoplasmic segment spans residues 113 to 114 (RK). A helical transmembrane segment spans residues 115 to 136 (SCILVATAILVIGSALCAASHG). Residues 137–138 (TT) lie on the Extracellular side of the membrane. Residues 139-159 (VPGMFWMLTVMRGLVGIGVGA) form a helical membrane-spanning segment. Over 160–184 (EYPTSTLSANESANEYTTTKRGGIL) the chain is Cytoplasmic. Residues 185 to 205 (VMVTNLPLAFGGPFATIIFLI) traverse the membrane as a helical segment. At 206–216 (VYKICSGTKHL) the chain is on the extracellular side. Residues 217–237 (EAIWRTVFAIGCFWPLSVFYF) form a helical membrane-spanning segment. The Cytoplasmic portion of the chain corresponds to 238–268 (RWKTATTEVYEKGRIKRNIPYFLALKFYWKR). The chain crosses the membrane as a helical span at residues 269–289 (LLGTCGTWFMYDFVTFPNGIF). The Extracellular portion of the chain corresponds to 290–306 (SSTIISSVIKDQNDLVK). Residues 307 to 327 (VAEWNLLLGVLAVLGVPIGAY) traverse the membrane as a helical segment. Residues 328-335 (LSDRIGRK) lie on the Cytoplasmic side of the membrane. The helical transmembrane segment at 336 to 356 (YTLMFGFSGYIIFGLIIGCAY) threads the bilayer. Over 357-360 (DQLK) the chain is Extracellular. The helical transmembrane segment at 361–381 (KITPLFIIFYAFMNMLGNAGP) threads the bilayer. The Cytoplasmic segment spans residues 382–399 (GDMLGVISSEASATAVRG). Residues 400-420 (VFYGLSAVTGKIGSVVGVECF) traverse the membrane as a helical segment. Residues 421–430 (QPIRDNLGAR) are Extracellular-facing. A helical transmembrane segment spans residues 431–451 (WTFIIAAICGLIGIIITYFFV). Residues 452–518 (PHSLESDLMK…IISVRQVDQS (67 aa)) lie on the Cytoplasmic side of the membrane.

It belongs to the major facilitator superfamily. Sugar transporter (TC 2.A.1.1) family.

The protein localises to the cell membrane. The enzyme catalyses sn-glycerol 3-phosphocholine(out) = sn-glycerol 3-phosphocholine(in). The catalysed reaction is sn-glycero-3-phospho-1D-myo-inositol(out) = sn-glycero-3-phospho-1D-myo-inositol(in). Its function is as follows. Glycerophosphodiester transporter that mediates uptake of both glycerophosphoinositol (GroPIns) and glycerophosphocholine (GroPCho) as sources of the nutrients inositol and phosphate. The protein is Glycerophosphoinositol transporter 1 of Saccharomyces cerevisiae (strain ATCC 204508 / S288c) (Baker's yeast).